Consider the following 233-residue polypeptide: Purine nucleoside phosphorylase DeoD-type (233 aa).

Position 4 (His4) interacts with a purine D-ribonucleoside. Phosphate-binding positions include Gly20, Arg24, Arg43, and Arg87–Thr90. Residues Glu179 to Glu181 and Ser203 to Asp204 each bind a purine D-ribonucleoside. The Proton donor role is filled by Asp204.

It belongs to the PNP/UDP phosphorylase family. Homohexamer; trimer of homodimers.

The enzyme catalyses a purine D-ribonucleoside + phosphate = a purine nucleobase + alpha-D-ribose 1-phosphate. The catalysed reaction is a purine 2'-deoxy-D-ribonucleoside + phosphate = a purine nucleobase + 2-deoxy-alpha-D-ribose 1-phosphate. Catalyzes the reversible phosphorolytic breakdown of the N-glycosidic bond in the beta-(deoxy)ribonucleoside molecules, with the formation of the corresponding free purine bases and pentose-1-phosphate. The polypeptide is Purine nucleoside phosphorylase DeoD-type (Helicobacter pylori (strain P12)).